Reading from the N-terminus, the 965-residue chain is RNA-directed RNA polymerase (965 aa).

One can recognise a RdRp catalytic domain in the interval 662–778 (PVAIGFDASR…ICPAVEVGRV (117 aa)).

Belongs to the tombusviridae RNA polymerase family.

It catalyses the reaction RNA(n) + a ribonucleoside 5'-triphosphate = RNA(n+1) + diphosphate. Functionally, RNA-dependent RNA polymerase that plays an essential role in the virus replication. In Zea mays (Maize), this protein is RNA-directed RNA polymerase.